Consider the following 415-residue polypeptide: Putative competence-damage inducible protein (415 aa).

Belongs to the CinA family.

In Limosilactobacillus reuteri (strain DSM 20016) (Lactobacillus reuteri), this protein is Putative competence-damage inducible protein.